Consider the following 729-residue polypeptide: MPCLLPSLLRATRAALPLLSPPRVVAASASQRLLSAPAQPAASRSSMDSAEELLAPLRLAVRQQGDFVRKLKEDKAPQVDVDRAVAELKARKRVLEAKELALQPKDDIVDRAKMEDTLKRRFFYDQAFAIYGGVSGLYDFGPVGCALKNNIIQAWRQHFIQEEQILEIDCTMLTPEPVLKTSGHVDKFADFMVKDVKNGECFRADHLLKAHLQKLMSDKKCSAEKKSEMESVLAQLDNYGQQELADLFVNYNVKSPTTGNDLSPPVPFNLMFQTFIGPGGNMPGYLRPETAQGIFLNFKRLLEFNQGKLPFAAAQIGNSFRNEISPRSGLIRVREFTMAEIEHFVDPTEKDHPKFQSVADLCLYLYSAKAQVTGQSARKMRLGDAVEQGVINNSVLGYFIGRIYLYLTKVGISPDKLRFRQHMENEMAHYACDCWDAESKTSYGWIEIVGCADRSCYDLSCHARATKVPLVAEKPLKEPKTVNVVQFEPNKGAVGKAYKKDAKLVLEYLSACDECYISEMELLLSEKGEFTIETEGKTFQLTKDMVSVKRFQKTLHVEEVVPSVIEPSFGLGRIMYTILEHTFHVREGDEQRTFFSFPAVVAPFKCSVLPLSQNQEFMPFVKELSEALTRNGVSHKVDDSSGSIGRRYARTDEIGVAFGITIDFDTVNKTPHTATLRDRDSMRQIRAEVSELPNVVRDLANGNITWADVEARYPLFEGQETGKKETVEE.

Residues 1 to 33 constitute a mitochondrion transit peptide; that stretch reads MPCLLPSLLRATRAALPLLSPPRVVAASASQRL. One can recognise a WHEP-TRS domain in the interval 53-109; that stretch reads LLAPLRLAVRQQGDFVRKLKEDKAPQVDVDRAVAELKARKRVLEAKELALQPKDDIV. K194 carries the N6-acetyllysine modification. A glycine-binding site is contributed by E289. ATP is bound by residues 321 to 323 and 332 to 333; these read RNE and RV. E340 is a binding site for glycine. Y443 bears the Phosphotyrosine mark. Position 447-448 (447-448) interacts with ATP; it reads EI. K491 carries the N6-acetyllysine modification. 566–568 provides a ligand contact to glycine; sequence EPS. R573 contributes to the ATP binding site. A Phosphoserine modification is found at S690. T726 is modified (phosphothreonine).

Belongs to the class-II aminoacyl-tRNA synthetase family. Homodimer.

The protein resides in the cytoplasm. It localises to the mitochondrion. It is found in the cell projection. The protein localises to the axon. Its subcellular location is the secreted. The protein resides in the extracellular exosome. The catalysed reaction is tRNA(Gly) + glycine + ATP = glycyl-tRNA(Gly) + AMP + diphosphate. It carries out the reaction 2 ATP + H(+) = P(1),P(4)-bis(5'-adenosyl) tetraphosphate + diphosphate. Catalyzes the ATP-dependent ligation of glycine to the 3'-end of its cognate tRNA, via the formation of an aminoacyl-adenylate intermediate (Gly-AMP). Also produces diadenosine tetraphosphate (Ap4A), a universal pleiotropic signaling molecule needed for cell regulation pathways, by direct condensation of 2 ATPs. Thereby, may play a special role in Ap4A homeostasis. The protein is Glycine--tRNA ligase (Gars1) of Mus musculus (Mouse).